The sequence spans 510 residues: uncharacterized protein (510 aa).

It to B.subtilis SpoVR.

This is an uncharacterized protein from Escherichia coli (strain K12).